The sequence spans 603 residues: Elongation factor 4 (603 aa).

Residues 2–184 (NHIRNFSIIA…AVIARVPPPK (183 aa)) enclose the tr-type G domain. Residues 14-19 (DHGKST) and 131-134 (NKMD) each bind GTP.

This sequence belongs to the TRAFAC class translation factor GTPase superfamily. Classic translation factor GTPase family. LepA subfamily.

The protein localises to the cell inner membrane. The catalysed reaction is GTP + H2O = GDP + phosphate + H(+). Required for accurate and efficient protein synthesis under certain stress conditions. May act as a fidelity factor of the translation reaction, by catalyzing a one-codon backward translocation of tRNAs on improperly translocated ribosomes. Back-translocation proceeds from a post-translocation (POST) complex to a pre-translocation (PRE) complex, thus giving elongation factor G a second chance to translocate the tRNAs correctly. Binds to ribosomes in a GTP-dependent manner. In Polaromonas sp. (strain JS666 / ATCC BAA-500), this protein is Elongation factor 4.